Reading from the N-terminus, the 2276-residue chain is Protein Ycf2 (2276 aa).

Residue 1621-1628 (GSIGTGRS) coordinates ATP.

Belongs to the Ycf2 family.

The protein resides in the plastid. Its subcellular location is the chloroplast stroma. Functionally, probable ATPase of unknown function. Its presence in a non-photosynthetic plant (Epifagus virginiana) and experiments in tobacco indicate that it has an essential function which is probably not related to photosynthesis. In Guizotia abyssinica (Niger), this protein is Protein Ycf2.